Reading from the N-terminus, the 113-residue chain is Large ribosomal subunit protein uL24 (113 aa).

Belongs to the universal ribosomal protein uL24 family. As to quaternary structure, part of the 50S ribosomal subunit.

One of two assembly initiator proteins, it binds directly to the 5'-end of the 23S rRNA, where it nucleates assembly of the 50S subunit. In terms of biological role, one of the proteins that surrounds the polypeptide exit tunnel on the outside of the subunit. This chain is Large ribosomal subunit protein uL24, found in Micrococcus luteus (Micrococcus lysodeikticus).